A 592-amino-acid chain; its full sequence is Aspartate--tRNA ligase (592 aa).

Residue Glu-171 coordinates L-aspartate. The segment at 195–198 (QLFK) is aspartate. Arg-217 lines the L-aspartate pocket. Residues 217–219 (RDE) and Gln-226 contribute to the ATP site. L-aspartate is bound at residue His-448. Residue Glu-482 coordinates ATP. Arg-489 is an L-aspartate binding site. 534–537 (GLDR) is a binding site for ATP.

This sequence belongs to the class-II aminoacyl-tRNA synthetase family. Type 1 subfamily. Homodimer.

It localises to the cytoplasm. It catalyses the reaction tRNA(Asp) + L-aspartate + ATP = L-aspartyl-tRNA(Asp) + AMP + diphosphate. In terms of biological role, catalyzes the attachment of L-aspartate to tRNA(Asp) in a two-step reaction: L-aspartate is first activated by ATP to form Asp-AMP and then transferred to the acceptor end of tRNA(Asp). The polypeptide is Aspartate--tRNA ligase (Vibrio vulnificus (strain CMCP6)).